A 459-amino-acid polypeptide reads, in one-letter code: Argininosuccinate lyase (459 aa).

It belongs to the lyase 1 family. Argininosuccinate lyase subfamily.

The protein resides in the cytoplasm. The enzyme catalyses 2-(N(omega)-L-arginino)succinate = fumarate + L-arginine. It functions in the pathway amino-acid biosynthesis; L-arginine biosynthesis; L-arginine from L-ornithine and carbamoyl phosphate: step 3/3. This chain is Argininosuccinate lyase, found in Staphylococcus aureus (strain USA300).